Consider the following 296-residue polypeptide: Light-independent protochlorophyllide reductase iron-sulfur ATP-binding protein (296 aa).

ATP-binding positions include 10-15 (GIGKST) and Lys-39. Mg(2+) is bound at residue Ser-14. The [4Fe-4S] cluster site is built by Cys-95 and Cys-129. 180 to 181 (NR) is a binding site for ATP.

It belongs to the NifH/BchL/ChlL family. As to quaternary structure, homodimer. Protochlorophyllide reductase is composed of three subunits; ChlL, ChlN and ChlB. It depends on [4Fe-4S] cluster as a cofactor.

The protein localises to the plastid. The protein resides in the chloroplast. It carries out the reaction chlorophyllide a + oxidized 2[4Fe-4S]-[ferredoxin] + 2 ADP + 2 phosphate = protochlorophyllide a + reduced 2[4Fe-4S]-[ferredoxin] + 2 ATP + 2 H2O. Its pathway is porphyrin-containing compound metabolism; chlorophyll biosynthesis (light-independent). Functionally, component of the dark-operative protochlorophyllide reductase (DPOR) that uses Mg-ATP and reduced ferredoxin to reduce ring D of protochlorophyllide (Pchlide) to form chlorophyllide a (Chlide). This reaction is light-independent. The L component serves as a unique electron donor to the NB-component of the complex, and binds Mg-ATP. This is Light-independent protochlorophyllide reductase iron-sulfur ATP-binding protein from Mesostigma viride (Green alga).